We begin with the raw amino-acid sequence, 433 residues long: Enolase (433 aa).

A (2R)-2-phosphoglycerate-binding site is contributed by Q167. E209 serves as the catalytic Proton donor. Mg(2+) contacts are provided by D246, E291, and D318. Residues K343, R372, S373, and K394 each coordinate (2R)-2-phosphoglycerate. K343 (proton acceptor) is an active-site residue.

This sequence belongs to the enolase family. Component of the RNA degradosome, a multiprotein complex involved in RNA processing and mRNA degradation. The cofactor is Mg(2+).

The protein resides in the cytoplasm. It is found in the secreted. The protein localises to the cell surface. The catalysed reaction is (2R)-2-phosphoglycerate = phosphoenolpyruvate + H2O. It participates in carbohydrate degradation; glycolysis; pyruvate from D-glyceraldehyde 3-phosphate: step 4/5. In terms of biological role, catalyzes the reversible conversion of 2-phosphoglycerate (2-PG) into phosphoenolpyruvate (PEP). It is essential for the degradation of carbohydrates via glycolysis. The polypeptide is Enolase (Aeromonas hydrophila subsp. hydrophila (strain ATCC 7966 / DSM 30187 / BCRC 13018 / CCUG 14551 / JCM 1027 / KCTC 2358 / NCIMB 9240 / NCTC 8049)).